Reading from the N-terminus, the 205-residue chain is Recombination protein RecR (205 aa).

A C4-type zinc finger spans residues 59 to 74; it reads CARCNTFCEGGLCDIC. One can recognise a Toprim domain in the interval 82 to 177; that stretch reads RRLMVVHMPA…KVSRLSQGIP (96 aa).

It belongs to the RecR family.

In terms of biological role, may play a role in DNA repair. It seems to be involved in an RecBC-independent recombinational process of DNA repair. It may act with RecF and RecO. The polypeptide is Recombination protein RecR (Neisseria meningitidis serogroup A / serotype 4A (strain DSM 15465 / Z2491)).